The sequence spans 511 residues: Probable DNA ligase (511 aa).

E209 lines the ATP pocket. Catalysis depends on K211, which acts as the N6-AMP-lysine intermediate. Residues R216, R231, E260, F299, R371, and K377 each coordinate ATP.

Belongs to the ATP-dependent DNA ligase family. It depends on Mg(2+) as a cofactor.

The enzyme catalyses ATP + (deoxyribonucleotide)n-3'-hydroxyl + 5'-phospho-(deoxyribonucleotide)m = (deoxyribonucleotide)n+m + AMP + diphosphate.. DNA ligase that seals nicks in double-stranded DNA during DNA replication, DNA recombination and DNA repair. The polypeptide is Probable DNA ligase (Mycolicibacterium gilvum (strain PYR-GCK) (Mycobacterium gilvum (strain PYR-GCK))).